Reading from the N-terminus, the 93-residue chain is uncharacterized protein (93 aa).

A run of 2 helical transmembrane segments spans residues 7-27 (LIFLGIILMFIGFFMITLGMI) and 70-90 (ILSVLIAILMIIWMFLFAFGI).

The protein localises to the cell membrane. This is an uncharacterized protein from Methanocaldococcus jannaschii (strain ATCC 43067 / DSM 2661 / JAL-1 / JCM 10045 / NBRC 100440) (Methanococcus jannaschii).